The chain runs to 513 residues: GMP synthase [glutamine-hydrolyzing] (513 aa).

The region spanning 3 to 192 (TVVVLDYGSQ…VSKVAKMEKN (190 aa)) is the Glutamine amidotransferase type-1 domain. Residue Cys-80 is the Nucleophile of the active site. Active-site residues include His-166 and Glu-168. One can recognise a GMPS ATP-PPase domain in the interval 193-388 (WKMTDFIEEK…LGLPDEMINR (196 aa)). Position 220–226 (220–226 (SGGVDSS)) interacts with ATP.

As to quaternary structure, homodimer.

It carries out the reaction XMP + L-glutamine + ATP + H2O = GMP + L-glutamate + AMP + diphosphate + 2 H(+). Its pathway is purine metabolism; GMP biosynthesis; GMP from XMP (L-Gln route): step 1/1. Its function is as follows. Catalyzes the synthesis of GMP from XMP. The chain is GMP synthase [glutamine-hydrolyzing] from Thermosipho africanus (strain TCF52B).